Reading from the N-terminus, the 368-residue chain is DNA replication and repair protein RecF (368 aa).

30 to 37 (GNNAQGKT) lines the ATP pocket.

This sequence belongs to the RecF family.

Its subcellular location is the cytoplasm. Functionally, the RecF protein is involved in DNA metabolism; it is required for DNA replication and normal SOS inducibility. RecF binds preferentially to single-stranded, linear DNA. It also seems to bind ATP. The chain is DNA replication and repair protein RecF from Streptococcus pyogenes serotype M18 (strain MGAS8232).